We begin with the raw amino-acid sequence, 842 residues long: MLLNLRLDGSSLHVLCSTKTLPISSPLDKFPSFKKLKQNYVPGTHESDKGPQRSTRNGDRGCGTVAHEVVAGKNLLLVNPSNGCVGKSGIIDGFVDKRSKDARFGGNGLVSEVHTKCSTKRLSYGGCIPAILEALDSIEDVEDALSPWAERLSNKERTIILKEQIHWERAVEIFEWFKSKGCYELNVIHYNIMLRILGKACKWRYVQSLWDEMIRKGIKPINSTYGTLIDVYSKGGLKVHALCWLGKMSKIGMQPDEVTTGIVLQMYKKAREFQKAEEFFKKWSCDENKADSHVCLSSYTYNTMIDTYGKSGQIKEASETFKRMLEEGIVPTTVTFNTMIHIYGNNGQLGEVTSLMKTMKLHCAPDTRTYNILISLHTKNNDIERAGAYFKEMKDDGLKPDPVSYRTLLYAFSIRHMVEEAEGLIAEMDDDNVEIDEYTQSALTRMYVEAEMLEKSWSWFKRFHVAGNMSSEGYSANIDAYGERGYLSEAERVFICCQEVNKRTVIEYNVMIKAYGISKSCEKACELFESMMSYGVTPDKCTYNTLVQILASADMPHKGRCYLEKMRETGYVSDCIPYCAVISSFVKLGQLNMAEEVYKEMVEYNIEPDVVVYGVLINAFADTGNVQQAMSYVEAMKEAGIPGNSVIYNSLIKLYTKVGYLDEAEAIYRKLLQSCNKTQYPDVYTSNCMINLYSERSMVRKAEAIFDSMKQRGEANEFTFAMMLCMYKKNGRFEEATQIAKQMREMKILTDPLSYNSVLGLFALDGRFKEAVETFKEMVSSGIQPDDSTFKSLGTILMKLGMSKKAVRKIEEIRKKEIKRGLELWISTLSSLVGIGDCVDEL.

Residues 40 to 61 (YVPGTHESDKGPQRSTRNGDRG) form a disordered region. Positions 45-59 (HESDKGPQRSTRNGD) are enriched in basic and acidic residues. 18 PPR repeats span residues 186–220 (NVIH…GIKP), 221–255 (INST…GMQP), 256–290 (DEVT…ENKA), 297–331 (SSYT…GIVP), 332–362 (TTVT…MKLH), 366–400 (DTRT…GLKP), 401–435 (DPVS…NVEI), 436–470 (DEYT…GNMS), 474–500 (YSAN…CQEV), 504–538 (TVIE…GVTP), 539–573 (DKCT…GYVS), 574–608 (DCIP…NIEP), 609–643 (DVVV…GIPG), 644–674 (NSVI…LLQS), 682–712 (DVYT…MKQR), 716–750 (NEFT…KILT), 751–785 (DPLS…GIQP), and 786–820 (DDST…EIKR).

This sequence belongs to the PPR family. P subfamily.

The polypeptide is Pentatricopeptide repeat-containing protein At3g23020 (Arabidopsis thaliana (Mouse-ear cress)).